The sequence spans 1070 residues: Phosphatidylinositol 4,5-bisphosphate 3-kinase catalytic subunit beta isoform (1070 aa).

A PI3K-ABD domain is found at 26–115; sequence SDGSIPVDFL…LPVLKLVTRS (90 aa). Residues 194–285 enclose the PI3K-RBD domain; it reads GGKLIVAVHF…RALPHFILVE (92 aa). Ser324 is modified (phosphoserine). The region spanning 327–496 is the C2 PI3K-type domain; sequence WENNNPFQIV…NATALHVKFP (170 aa). A Nuclear localization signal motif is present at residues 410 to 418; sequence KVKTKKSTK. One can recognise a PIK helical domain in the interval 524 to 701; that stretch reads ANVSSRGGKK…GVILEAYCRG (178 aa). The PI3K/PI4K catalytic domain maps to 772–1053; that stretch reads YVEKCKYMDS…KFDEALRESW (282 aa). Residues 778-784 form a G-loop region; sequence YMDSKMK. Positions 916–924 are catalytic loop; that stretch reads GIGDRHSDN. Residues 935–961 form an activation loop region; the sequence is HIDFGHILGNFKSKFGIKRERVPFILT. Phosphoserine; by autocatalysis is present on Ser1070.

This sequence belongs to the PI3/PI4-kinase family. As to quaternary structure, heterodimer of a catalytic subunit PIK3CB and a p85 regulatory subunit (PIK3R1, PIK3R2 or PIK3R3). Interaction with PIK3R2 is required for nuclear localization and nuclear export. Part of a complex with PIK3R1 and PTEN. Binding to PTEN may antagonize the lipid kinase activity under normal growth conditions. Part of a complex involved in autophagosome formation composed of PIK3C3 and PIK3R4. Interacts with BECN1, ATG14 and RAB5A. In terms of processing, autophosphorylation at Ser-1070 negatively regulates the phosphatidylinositol-4,5-bisphosphate 3-kinase activity. Expressed ubiquitously.

The protein resides in the cytoplasm. It is found in the nucleus. The enzyme catalyses a 1,2-diacyl-sn-glycero-3-phospho-(1D-myo-inositol-4,5-bisphosphate) + ATP = a 1,2-diacyl-sn-glycero-3-phospho-(1D-myo-inositol-3,4,5-trisphosphate) + ADP + H(+). It carries out the reaction 1-octadecanoyl-2-(5Z,8Z,11Z,14Z)-eicosatetraenoyl-sn-glycero-3-phospho-1D-myo-inositol 4,5-bisphosphate + ATP = 1-octadecanoyl-2-(5Z,8Z,11Z,14Z-eicosatetraenoyl)-sn-glycero-3-phospho-(1D-myo-inositol 3,4,5-triphosphate) + ADP + H(+). The catalysed reaction is L-seryl-[protein] + ATP = O-phospho-L-seryl-[protein] + ADP + H(+). Its pathway is phospholipid metabolism; phosphatidylinositol phosphate biosynthesis. Its function is as follows. Phosphoinositide-3-kinase (PI3K) phosphorylates phosphatidylinositol derivatives at position 3 of the inositol ring to produce 3-phosphoinositides. Uses ATP and PtdIns(4,5)P2 (phosphatidylinositol 4,5-bisphosphate) to generate phosphatidylinositol 3,4,5-trisphosphate (PIP3). PIP3 plays a key role by recruiting PH domain-containing proteins to the membrane, including AKT1 and PDPK1, activating signaling cascades involved in cell growth, survival, proliferation, motility and morphology. Involved in the activation of AKT1 upon stimulation by G-protein coupled receptors (GPCRs) ligands such as CXCL12, sphingosine 1-phosphate, and lysophosphatidic acid. May also act downstream receptor tyrosine kinases. Required in different signaling pathways for stable platelet adhesion and aggregation. Plays a role in platelet activation signaling triggered by GPCRs, alpha-IIb/beta-3 integrins (ITGA2B/ ITGB3) and ITAM (immunoreceptor tyrosine-based activation motif)-bearing receptors such as GP6. Regulates the strength of adhesion of ITGA2B/ ITGB3 activated receptors necessary for the cellular transmission of contractile forces. Required for platelet aggregation induced by F2 (thrombin) and thromboxane A2 (TXA2). Has a role in cell survival. May have a role in cell migration. Involved in the early stage of autophagosome formation. Modulates the intracellular level of PtdIns3P (phosphatidylinositol 3-phosphate) and activates PIK3C3 kinase activity. May act as a scaffold, independently of its lipid kinase activity to positively regulate autophagy. May have a role in insulin signaling as scaffolding protein in which the lipid kinase activity is not required. May have a kinase-independent function in regulating cell proliferation and in clathrin-mediated endocytosis. Mediator of oncogenic signal in cell lines lacking PTEN. The lipid kinase activity is necessary for its role in oncogenic transformation. Required for the growth of ERBB2 and RAS driven tumors. Also has a protein kinase activity showing autophosphorylation. This Homo sapiens (Human) protein is Phosphatidylinositol 4,5-bisphosphate 3-kinase catalytic subunit beta isoform (PIK3CB).